The chain runs to 101 residues: Large ribosomal subunit protein eL30 (101 aa).

Belongs to the eukaryotic ribosomal protein eL30 family.

The chain is Large ribosomal subunit protein eL30 from Pyrobaculum islandicum (strain DSM 4184 / JCM 9189 / GEO3).